A 558-amino-acid chain; its full sequence is SPATS2-like protein (558 aa).

Ala-2 bears the N-acetylalanine mark. Residues Gly-63–Gln-79 show a composition bias toward basic residues. Disordered stretches follow at residues Gly-63–Thr-148 and Asp-161–Pro-202. 2 stretches are compositionally biased toward basic and acidic residues: residues Gly-80–Glu-92 and Gly-110–Arg-142. Phosphoserine is present on Ser-120. The stretch at Lys-279–Leu-344 forms a coiled coil. Residues Lys-383–Ala-514 are disordered. Residues Asp-416 to Asn-433 are compositionally biased toward polar residues. At Ser-455 the chain carries Phosphoserine. Residues His-469–Gly-485 show a composition bias toward basic residues.

Belongs to the SPATS2 family.

The protein resides in the cytoplasm. It localises to the nucleus. Its subcellular location is the nucleolus. This is SPATS2-like protein (Spats2l) from Rattus norvegicus (Rat).